We begin with the raw amino-acid sequence, 376 residues long: Lipoyl synthase, mitochondrial (376 aa).

[4Fe-4S] cluster contacts are provided by C103, C108, C114, C134, C138, C141, and S349. Residues 119-338 (EHGTQTATIM…EDRGNQLGFL (220 aa)) enclose the Radical SAM core domain.

It belongs to the radical SAM superfamily. Lipoyl synthase family. The cofactor is [4Fe-4S] cluster.

It localises to the mitochondrion. It catalyses the reaction [[Fe-S] cluster scaffold protein carrying a second [4Fe-4S](2+) cluster] + N(6)-octanoyl-L-lysyl-[protein] + 2 oxidized [2Fe-2S]-[ferredoxin] + 2 S-adenosyl-L-methionine + 4 H(+) = [[Fe-S] cluster scaffold protein] + N(6)-[(R)-dihydrolipoyl]-L-lysyl-[protein] + 4 Fe(3+) + 2 hydrogen sulfide + 2 5'-deoxyadenosine + 2 L-methionine + 2 reduced [2Fe-2S]-[ferredoxin]. Its pathway is protein modification; protein lipoylation via endogenous pathway; protein N(6)-(lipoyl)lysine from octanoyl-[acyl-carrier-protein]: step 2/2. In terms of biological role, catalyzes the radical-mediated insertion of two sulfur atoms into the C-6 and C-8 positions of the octanoyl moiety bound to the lipoyl domains of lipoate-dependent enzymes, thereby converting the octanoylated domains into lipoylated derivatives. This chain is Lipoyl synthase, mitochondrial, found in Drosophila ananassae (Fruit fly).